Here is a 320-residue protein sequence, read N- to C-terminus: o-succinylbenzoate synthase (320 aa).

Lys-133 functions as the Proton donor in the catalytic mechanism. Mg(2+)-binding residues include Asp-161, Glu-190, and Asp-213. The Proton acceptor role is filled by Lys-235.

This sequence belongs to the mandelate racemase/muconate lactonizing enzyme family. MenC type 1 subfamily. A divalent metal cation serves as cofactor.

The catalysed reaction is (1R,6R)-6-hydroxy-2-succinyl-cyclohexa-2,4-diene-1-carboxylate = 2-succinylbenzoate + H2O. The protein operates within quinol/quinone metabolism; 1,4-dihydroxy-2-naphthoate biosynthesis; 1,4-dihydroxy-2-naphthoate from chorismate: step 4/7. It participates in quinol/quinone metabolism; menaquinone biosynthesis. Converts 2-succinyl-6-hydroxy-2,4-cyclohexadiene-1-carboxylate (SHCHC) to 2-succinylbenzoate (OSB). In Escherichia coli O17:K52:H18 (strain UMN026 / ExPEC), this protein is o-succinylbenzoate synthase.